The chain runs to 738 residues: Cleavage and polyadenylation specificity factor subunit 2 (738 aa).

Belongs to the metallo-beta-lactamase superfamily. RNA-metabolizing metallo-beta-lactamase-like family. CPSF2/YSH1 subfamily. In terms of assembly, CPSF is a heterotetramer composed of four distinct subunits 160, 100, 70 and 30 kDa.

The protein localises to the nucleus. In terms of biological role, CPSF plays a key role in pre-mRNA 3'-end formation, recognizing the AAUAAA signal sequence and interacting with poly(A)polymerase and other factors to bring about cleavage and poly(A) addition. The chain is Cleavage and polyadenylation specificity factor subunit 2 from Oryza sativa subsp. japonica (Rice).